The primary structure comprises 409 residues: Elongation factor Tu (409 aa).

Residues 10–214 enclose the tr-type G domain; that stretch reads KPHVNIGTIG…EVDAYIPTPE (205 aa). The tract at residues 19–26 is G1; it reads GHVDHGKT. 19–26 serves as a coordination point for GTP; sequence GHVDHGKT. Thr26 is a Mg(2+) binding site. The tract at residues 60-64 is G2; the sequence is GITIN. A G3 region spans residues 81 to 84; it reads DCPG. Residues 81-85 and 136-139 contribute to the GTP site; these read DCPGH and NKQD. A G4 region spans residues 136–139; that stretch reads NKQD. Positions 174 to 176 are G5; it reads SAL.

The protein belongs to the TRAFAC class translation factor GTPase superfamily. Classic translation factor GTPase family. EF-Tu/EF-1A subfamily. In terms of assembly, monomer.

Its subcellular location is the cytoplasm. The enzyme catalyses GTP + H2O = GDP + phosphate + H(+). GTP hydrolase that promotes the GTP-dependent binding of aminoacyl-tRNA to the A-site of ribosomes during protein biosynthesis. The chain is Elongation factor Tu from Acaryochloris marina (strain MBIC 11017).